We begin with the raw amino-acid sequence, 1173 residues long: Calcium-transporting ATPase 2 (1173 aa).

Residues 1 to 24 (MSRQDENSALLANNENNKPSYTGN) form a disordered region. Topologically, residues 1–114 (MSRQDENSAL…LQLVWAAFND (114 aa)) are cytoplasmic. Residues 7–17 (NSALLANNENN) show a composition bias toward low complexity. A helical transmembrane segment spans residues 115-139 (KTMQLLTVAAVVSFVLGLYELWMQP). The Vacuolar portion of the chain corresponds to 140–152 (PQYDPEGNKIKQV). The chain crosses the membrane as a helical span at residues 153–173 (DWIEGVAIMIAVFVVVLVSAA). The Cytoplasmic segment spans residues 174–349 (NDYQKELQFA…LADNISVYGC (176 aa)). Residues 350–368 (VSAIILFLVLFTRYLFYII) traverse the membrane as a helical segment. Residues 369-388 (PEDGRFHDLDPAQKGSKFMN) lie on the Vacuolar side of the membrane. The helical transmembrane segment at 389 to 409 (IFITSITVIVVAVPEGLPLAV) threads the bilayer. Ca(2+) contacts are provided by V398 and E403. Residues 410-899 (TLALAFATTR…RCVSVSIKKF (490 aa)) are Cytoplasmic-facing. The 4-aspartylphosphate intermediate role is filled by D445. 2 residues coordinate Mg(2+): D445 and T447. ATP contacts are provided by residues T447, K643, 762–764 (TGD), R816, and K822. Residue D841 participates in Mg(2+) binding. N844 provides a ligand contact to ATP. A helical membrane pass occupies residues 900-922 (IQFQLIVNITAVILTFVSSVASS). N907 contacts Ca(2+). The Vacuolar portion of the chain corresponds to 923-929 (DETSVLT). A helical membrane pass occupies residues 930–950 (AVQLLWINLIMDTLAALALAT). Positions 937 and 941 each coordinate Ca(2+). Over 951–976 (DKPDPNIMDRKPRGRSTSLISVSTWK) the chain is Cytoplasmic. The helical transmembrane segment at 977 to 998 (MILSQATLQLIVTFILHFYGPE) threads the bilayer. Residues 999–1010 (LFFKKHEDEITS) are Vacuolar-facing. Residues 1011–1029 (HQQQQLNAMTFNTFVWLQF) form a helical membrane-spanning segment. The Cytoplasmic segment spans residues 1030–1065 (FTMLVSRKLDEGDGISNWRGRISAANLNFFQDLGRN). Residues 1066-1086 (YYFLTIMAIIGSCQVLIMFFG) form a helical membrane-spanning segment. The Vacuolar portion of the chain corresponds to 1087-1099 (GAPFSIARQTKSM). Residues 1100–1120 (WITAVLCGMLSLIMGVLVRIC) traverse the membrane as a helical segment. At 1121 to 1173 (PDEVAVKVFPAAFVQRFKYVFGLEFLRKNHTGKHDDEEALLEESDSPESTAFY) the chain is on the cytoplasmic side.

It belongs to the cation transport ATPase (P-type) (TC 3.A.3) family.

Its subcellular location is the vacuole membrane. It catalyses the reaction Ca(2+)(in) + ATP + H2O = Ca(2+)(out) + ADP + phosphate + H(+). In terms of biological role, this magnesium-dependent enzyme catalyzes the hydrolysis of ATP coupled with the transport of calcium. Transports the calcium to the vacuole and participates in the control of the cytosolic free calcium. The chain is Calcium-transporting ATPase 2 (PMC1) from Saccharomyces cerevisiae (strain ATCC 204508 / S288c) (Baker's yeast).